Consider the following 335-residue polypeptide: Prepilin leader peptidase/N-methyltransferase (335 aa).

The chain crosses the membrane as a helical span at residues 13 to 33; the sequence is LFAVFLFVLGLCVGSFLNVVI. Residues Cys-49, Cys-52, Cys-74, and Cys-77 each coordinate Zn(2+). A run of 5 helical transmembrane segments spans residues 105-125, 131-151, 206-226, 258-278, and 299-319; these read WTYE…LAFI, ILPL…AFPL, LLGV…LMLL, PGLP…VQPI, and IPFG…GPWL.

The protein belongs to the peptidase A24 family. The cofactor is Zn(2+).

It is found in the cell inner membrane. It catalyses the reaction Typically cleaves a -Gly-|-Phe- bond to release an N-terminal, basic peptide of 5-8 residues from type IV prepilin, and then N-methylates the new N-terminal amino group, the methyl donor being S-adenosyl-L-methionine.. Functionally, plays an essential role in type IV pili and type II pseudopili formation by proteolytically removing the leader sequence from substrate proteins and subsequently monomethylating the alpha-amino group of the newly exposed N-terminal phenylalanine. In Myxococcus xanthus (strain DK1622), this protein is Prepilin leader peptidase/N-methyltransferase (pilD).